A 298-amino-acid chain; its full sequence is Syntenin-1 (298 aa).

Position 2 is an N-acetylserine (Ser2). The interval 2–60 (SLYPSLEDLKVDKVIQAQTAFSANPANPAILSEASAPIPHDGNLYPRLYPELSQYMGLS) is interaction with PDCD6IP. Short sequence motifs (LYPX(n)L motif) lie at residues 3–7 (LYPSL), 45–49 (LYPRL), and 49–53 (LYPEL). The residue at position 6 (Ser6) is a Phosphoserine. Tyr46 is modified (phosphotyrosine). PDZ domains follow at residues 114–193 (EVIL…IRDR) and 198–273 (TITM…MPAF). Residues Asn215 and 250–251 (KD) each bind a 1,2-diacyl-sn-glycero-3-phospho-(1D-myo-inositol-4,5-bisphosphate).

As to quaternary structure, monomer and homodimer. Interacts with SDC1, SDC2, SDC3, SDC4, NRXN2, EPHA7, EPHB1, NF2 isoform 1, TGFA and IL5RA. Interacts with NFASC and PTPRJ. Interacts with SDCBP2. Interacts with PDCD6IP. Forms a complex with PDCD6IP and SDC2. Interacts (via C-terminus) with TGFBR1. Binds to FZD7; this interaction is increased by inositol trisphosphate (IP3). Interacts with SMO. Phosphorylated on tyrosine residues. In terms of tissue distribution, expressed in lung cancers, including adenocarcinoma, squamous cell carcinoma and small-cell carcinoma (at protein level). Widely expressed. Expressed in fetal kidney, liver, lung and brain. In adult highest expression in heart and placenta.

The protein resides in the cell junction. It is found in the focal adhesion. Its subcellular location is the adherens junction. The protein localises to the cell membrane. It localises to the endoplasmic reticulum membrane. The protein resides in the nucleus. It is found in the melanosome. Its subcellular location is the cytoplasm. The protein localises to the cytosol. It localises to the cytoskeleton. The protein resides in the secreted. It is found in the extracellular exosome. Its subcellular location is the membrane raft. Functionally, multifunctional adapter protein involved in diverse array of functions including trafficking of transmembrane proteins, neuro and immunomodulation, exosome biogenesis, and tumorigenesis. Positively regulates TGFB1-mediated SMAD2/3 activation and TGFB1-induced epithelial-to-mesenchymal transition (EMT) and cell migration in various cell types. May increase TGFB1 signaling by enhancing cell-surface expression of TGFR1 by preventing the interaction between TGFR1 and CAV1 and subsequent CAV1-dependent internalization and degradation of TGFR1. In concert with SDC1/4 and PDCD6IP, regulates exosome biogenesis. Regulates migration, growth, proliferation, and cell cycle progression in a variety of cancer types. In adherens junctions may function to couple syndecans to cytoskeletal proteins or signaling components. Seems to couple transcription factor SOX4 to the IL-5 receptor (IL5RA). May also play a role in vesicular trafficking. Seems to be required for the targeting of TGFA to the cell surface in the early secretory pathway. The polypeptide is Syntenin-1 (SDCBP) (Homo sapiens (Human)).